Reading from the N-terminus, the 447-residue chain is Tubulin beta chain (447 aa).

GTP contacts are provided by Gln-11, Glu-69, Ser-138, Gly-142, Thr-143, Gly-144, Asn-204, and Asn-226. A Mg(2+)-binding site is contributed by Glu-69. Residues 424-447 (QYQDAGVDEEEEEYEEEAPLEGEE) are disordered. Acidic residues predominate over residues 429 to 447 (GVDEEEEEYEEEAPLEGEE).

The protein belongs to the tubulin family. Dimer of alpha and beta chains. A typical microtubule is a hollow water-filled tube with an outer diameter of 25 nm and an inner diameter of 15 nM. Alpha-beta heterodimers associate head-to-tail to form protofilaments running lengthwise along the microtubule wall with the beta-tubulin subunit facing the microtubule plus end conferring a structural polarity. Microtubules usually have 13 protofilaments but different protofilament numbers can be found in some organisms and specialized cells. Mg(2+) serves as cofactor.

It localises to the cytoplasm. It is found in the cytoskeleton. Its function is as follows. Tubulin is the major constituent of microtubules, a cylinder consisting of laterally associated linear protofilaments composed of alpha- and beta-tubulin heterodimers. Microtubules grow by the addition of GTP-tubulin dimers to the microtubule end, where a stabilizing cap forms. Below the cap, tubulin dimers are in GDP-bound state, owing to GTPase activity of alpha-tubulin. The protein is Tubulin beta chain (tub-2) of Neurospora crassa (strain ATCC 24698 / 74-OR23-1A / CBS 708.71 / DSM 1257 / FGSC 987).